Reading from the N-terminus, the 453-residue chain is 3-phosphoshikimate 1-carboxyvinyltransferase (453 aa).

Residues lysine 28, serine 29, and arginine 33 each contribute to the 3-phosphoshikimate site. A phosphoenolpyruvate-binding site is contributed by lysine 28. Positions 101 and 129 each coordinate phosphoenolpyruvate. The 3-phosphoshikimate site is built by serine 174, glutamine 176, aspartate 326, and lysine 353. Glutamine 176 contacts phosphoenolpyruvate. Aspartate 326 functions as the Proton acceptor in the catalytic mechanism. Phosphoenolpyruvate-binding residues include arginine 357 and arginine 405.

It belongs to the EPSP synthase family. Monomer.

It is found in the cytoplasm. It catalyses the reaction 3-phosphoshikimate + phosphoenolpyruvate = 5-O-(1-carboxyvinyl)-3-phosphoshikimate + phosphate. It participates in metabolic intermediate biosynthesis; chorismate biosynthesis; chorismate from D-erythrose 4-phosphate and phosphoenolpyruvate: step 6/7. Its function is as follows. Catalyzes the transfer of the enolpyruvyl moiety of phosphoenolpyruvate (PEP) to the 5-hydroxyl of shikimate-3-phosphate (S3P) to produce enolpyruvyl shikimate-3-phosphate and inorganic phosphate. The chain is 3-phosphoshikimate 1-carboxyvinyltransferase from Zymomonas mobilis subsp. mobilis (strain ATCC 31821 / ZM4 / CP4).